We begin with the raw amino-acid sequence, 1177 residues long: Lysylphosphatidylglycerol biosynthesis bifunctional protein LysX (1177 aa).

Disordered regions lie at residues 1 to 40 (MRRA…AKFV) and 61 to 85 (VTLA…PANR). The segment at 1 to 676 (MRRAGRSRQF…LLHHDGSAPD (676 aa)) is phosphatidylglycerol lysyltransferase. The span at 8–21 (RQFSSVEEAFSTSA) shows a compositional bias: polar residues. Residues 65–82 (SPGSRSGSGPRSGPRLGP) are compositionally biased toward low complexity. A run of 6 helical transmembrane segments spans residues 93–113 (VPAA…LGSV), 135–155 (FPDT…ALTA), 159–179 (IAWL…VADI), 189–209 (IFGE…LVLA), 227–247 (AVLV…VELF), and 281–301 (VFLN…ATIV). The tract at residues 673–693 (SAPDVSGLRPERTDAEEARSR) is disordered. The segment at 677–1177 (VSGLRPERTD…TLPFPLAKPH (501 aa)) is lysine--tRNA ligase. Basic and acidic residues predominate over residues 681–693 (RPERTDAEEARSR). Mg(2+)-binding residues include Asp-1089 and Glu-1096.

It in the N-terminal section; belongs to the LPG synthetase family. In the C-terminal section; belongs to the class-II aminoacyl-tRNA synthetase family. Mg(2+) serves as cofactor.

It localises to the cell membrane. The enzyme catalyses tRNA(Lys) + L-lysine + ATP = L-lysyl-tRNA(Lys) + AMP + diphosphate. The catalysed reaction is L-lysyl-tRNA(Lys) + a 1,2-diacyl-sn-glycero-3-phospho-(1'-sn-glycerol) = a 1,2-diacyl-sn-glycero-3-phospho-1'-(3'-O-L-lysyl)-sn-glycerol + tRNA(Lys). Functionally, catalyzes the production of L-lysyl-tRNA(Lys)transfer and the transfer of a lysyl group from L-lysyl-tRNA(Lys) to membrane-bound phosphatidylglycerol (PG), which produces lysylphosphatidylglycerol (LPG), one of the components of the bacterial membrane with a positive net charge. LPG synthesis contributes to the resistance to cationic antimicrobial peptides (CAMPs) and likely protects M.tuberculosis against the CAMPs produced by competiting microorganisms (bacteriocins). In fact, the modification of anionic phosphatidylglycerol with positively charged L-lysine results in repulsion of the peptides. This is Lysylphosphatidylglycerol biosynthesis bifunctional protein LysX (lysX) from Mycobacterium avium (strain 104).